A 196-amino-acid chain; its full sequence is Adenylate kinase (196 aa).

9 to 17 (GIPGVGKST) lines the ATP pocket.

The protein belongs to the archaeal adenylate kinase family.

The protein resides in the cytoplasm. The enzyme catalyses AMP + ATP = 2 ADP. The polypeptide is Adenylate kinase (adkA) (Pyrococcus horikoshii (strain ATCC 700860 / DSM 12428 / JCM 9974 / NBRC 100139 / OT-3)).